The primary structure comprises 127 residues: Secreted RxLR effector protein 3 (127 aa).

An N-terminal signal peptide occupies residues 1 to 20 (MRPPLLLFLTVTVLVSCASA). Residues 30-48 (RSLRSIKTTTNDDAAEEER) carry the RxLR-dEER motif.

The protein belongs to the RxLR effector family.

Its subcellular location is the secreted. The protein localises to the host cell. Functionally, secreted effector that partially suppresses elicitor-induced cell death in host and enhances virulence of P.parasitica. The protein is Secreted RxLR effector protein 3 of Phytophthora nicotianae (Potato buckeye rot agent).